Here is an 874-residue protein sequence, read N- to C-terminus: Probable inorganic carbon transporter subunit DabA (874 aa).

Zn(2+)-binding residues include cysteine 398, aspartate 400, histidine 580, and cysteine 595.

Belongs to the inorganic carbon transporter (TC 9.A.2) DabA family. As to quaternary structure, forms a complex with DabB. It depends on Zn(2+) as a cofactor.

It localises to the cell membrane. Its function is as follows. Part of an energy-coupled inorganic carbon pump. The sequence is that of Probable inorganic carbon transporter subunit DabA from Bacillus thuringiensis subsp. konkukian (strain 97-27).